Consider the following 754-residue polypeptide: Polycomb protein mes-3 (754 aa).

Residues M1–T83 are disordered. Positions A31 to L40 are enriched in basic and acidic residues. Positions S51–S61 are enriched in low complexity.

Forms a heterotrimeric complex with the Polycomb proteins mes-2 and mes-3. Does not interact with mes-4. Interacts with nyfa-1. In terms of tissue distribution, in adults, it is predominantly expressed in the germline, and weakly expressed in intestinal cells.

The protein resides in the nucleus. Component of a Polycomb group (PcG) complex. PcG proteins act by forming multiprotein complexes, which are required to maintain the transcriptionally repressive state of homeotic genes throughout development. In association with the nfya-1-NF-Y complex, may play a role in repressing the expression of the homeobox protein egl-5 in tissues such as the head. PcG proteins are not required to initiate repression, but to maintain it during later stages of development. The mes-2/mes-3/mes-6 complex may participate in the global inactivation of the X chromosomes in germline cells. The complex may act via methylation of histone H3 'Lys-27', rendering chromatin heritably changed in its expressibility. This complex is required to exclude mes-4 from the inactivated X-chromosomes in germline cells. The protein is Polycomb protein mes-3 of Caenorhabditis elegans.